Here is a 542-residue protein sequence, read N- to C-terminus: CTP synthase (542 aa).

The interval Met-1–Leu-265 is amidoligase domain. Ser-13 contributes to the CTP binding site. Ser-13 contacts UTP. ATP is bound by residues Ser-14–Ile-19 and Asp-71. Residues Asp-71 and Glu-139 each coordinate Mg(2+). Residues Asp-146–Glu-148, Lys-186–Gln-191, and Lys-222 contribute to the CTP site. UTP-binding positions include Lys-186 to Gln-191 and Lys-222. Residues Thr-290–Lys-541 enclose the Glutamine amidotransferase type-1 domain. Gly-351 is a binding site for L-glutamine. Cys-378 serves as the catalytic Nucleophile; for glutamine hydrolysis. Residues Leu-379–Gln-382, Glu-402, and Arg-469 contribute to the L-glutamine site. Residues His-514 and Glu-516 contribute to the active site.

Belongs to the CTP synthase family. Homotetramer.

The catalysed reaction is UTP + L-glutamine + ATP + H2O = CTP + L-glutamate + ADP + phosphate + 2 H(+). The enzyme catalyses L-glutamine + H2O = L-glutamate + NH4(+). It catalyses the reaction UTP + NH4(+) + ATP = CTP + ADP + phosphate + 2 H(+). It functions in the pathway pyrimidine metabolism; CTP biosynthesis via de novo pathway; CTP from UDP: step 2/2. With respect to regulation, allosterically activated by GTP, when glutamine is the substrate; GTP has no effect on the reaction when ammonia is the substrate. The allosteric effector GTP functions by stabilizing the protein conformation that binds the tetrahedral intermediate(s) formed during glutamine hydrolysis. Inhibited by the product CTP, via allosteric rather than competitive inhibition. Catalyzes the ATP-dependent amination of UTP to CTP with either L-glutamine or ammonia as the source of nitrogen. Regulates intracellular CTP levels through interactions with the four ribonucleotide triphosphates. This Pseudomonas putida (strain W619) protein is CTP synthase.